We begin with the raw amino-acid sequence, 317 residues long: OVARIAN TUMOR DOMAIN-containing deubiquitinating enzyme 4 (317 aa).

The OTU domain maps to 168–306; sequence YSIIGIPGDG…FGHYDALLLH (139 aa). The active site involves Asp-176. Cys-179 (nucleophile) is an active-site residue. Residue His-299 is part of the active site.

This sequence belongs to the peptidase C65 family.

Its subcellular location is the cytoplasm. The catalysed reaction is Thiol-dependent hydrolysis of ester, thioester, amide, peptide and isopeptide bonds formed by the C-terminal Gly of ubiquitin (a 76-residue protein attached to proteins as an intracellular targeting signal).. Its function is as follows. Hydrolase that can remove conjugated ubiquitin from proteins in vitro and may therefore play an important regulatory role at the level of protein turnover by preventing degradation. Cysteine protease with a preference for 'Lys-63' over 'Lys-48'-linked over 'Met-1' ubiquitin (UB) tetramers (e.g. Ub3 and Ub4) as substrates. Also cleaves RUB-GST fusion. This is OVARIAN TUMOR DOMAIN-containing deubiquitinating enzyme 4 from Arabidopsis thaliana (Mouse-ear cress).